The chain runs to 73 residues: Translation initiation factor IF-1 (73 aa).

One can recognise an S1-like domain in the interval 1-73 (MAKKEDTIVL…TKARVVYRHR (73 aa)).

This sequence belongs to the IF-1 family. Component of the 30S ribosomal translation pre-initiation complex which assembles on the 30S ribosome in the order IF-2 and IF-3, IF-1 and N-formylmethionyl-tRNA(fMet); mRNA recruitment can occur at any time during PIC assembly.

Its subcellular location is the cytoplasm. In terms of biological role, one of the essential components for the initiation of protein synthesis. Stabilizes the binding of IF-2 and IF-3 on the 30S subunit to which N-formylmethionyl-tRNA(fMet) subsequently binds. Helps modulate mRNA selection, yielding the 30S pre-initiation complex (PIC). Upon addition of the 50S ribosomal subunit IF-1, IF-2 and IF-3 are released leaving the mature 70S translation initiation complex. In Chlamydia abortus (strain DSM 27085 / S26/3) (Chlamydophila abortus), this protein is Translation initiation factor IF-1.